The following is a 47-amino-acid chain: U18-ctenitoxin-Pn1a (47 aa).

5 disulfide bridges follow: C2–C16, C9–C22, C13–C46, C15–C34, and C24–C32.

As to expression, expressed by the venom gland.

The protein localises to the secreted. Its function is as follows. Neurotoxin. Causes spastic paralysis and death in mice by intracerebroventricular injection at dose levels of 3 ug per mouse. The chain is U18-ctenitoxin-Pn1a from Phoneutria nigriventer (Brazilian armed spider).